The primary structure comprises 86 residues: Omega-theraphotoxin-Hhn1f 3 (86 aa).

The signal sequence occupies residues 1–21; sequence MKSIVFVALFGLALLAVACSA. A propeptide spanning residues 22–50 is cleaved from the precursor; it reads SEDAHKELLKEVVRAMVVDKTDAVQAEER. 3 disulfides stabilise this stretch: Cys-52–Cys-66, Cys-59–Cys-71, and Cys-65–Cys-78.

This sequence belongs to the neurotoxin 10 (Hwtx-1) family. 17 (Hntx-9) subfamily. Expressed by the venom gland.

It is found in the secreted. In terms of biological role, ion channel inhibitor. This is Omega-theraphotoxin-Hhn1f 3 from Cyriopagopus hainanus (Chinese bird spider).